Consider the following 212-residue polypeptide: Peptide methionine sulfoxide reductase MsrA (212 aa).

C52 is an active-site residue.

It belongs to the MsrA Met sulfoxide reductase family.

It catalyses the reaction L-methionyl-[protein] + [thioredoxin]-disulfide + H2O = L-methionyl-(S)-S-oxide-[protein] + [thioredoxin]-dithiol. The catalysed reaction is [thioredoxin]-disulfide + L-methionine + H2O = L-methionine (S)-S-oxide + [thioredoxin]-dithiol. Its function is as follows. Has an important function as a repair enzyme for proteins that have been inactivated by oxidation. Catalyzes the reversible oxidation-reduction of methionine sulfoxide in proteins to methionine. This Salmonella schwarzengrund (strain CVM19633) protein is Peptide methionine sulfoxide reductase MsrA.